Consider the following 410-residue polypeptide: Dephospho-CoA kinase (410 aa).

The region spanning 3–201 (CIGITGGIGA…HRILPFAYNL (199 aa)) is the DPCK domain. 11-16 (GAGKSL) is a binding site for ATP. The UPF0157 stretch occupies residues 196 to 410 (PFAYNLSQRQ…EWADSTGWRL (215 aa)).

It in the N-terminal section; belongs to the CoaE family. This sequence in the C-terminal section; belongs to the UPF0157 (GrpB) family.

The protein localises to the cytoplasm. It catalyses the reaction 3'-dephospho-CoA + ATP = ADP + CoA + H(+). It functions in the pathway cofactor biosynthesis; coenzyme A biosynthesis; CoA from (R)-pantothenate: step 5/5. Catalyzes the phosphorylation of the 3'-hydroxyl group of dephosphocoenzyme A to form coenzyme A. This chain is Dephospho-CoA kinase, found in Mycobacterium leprae (strain TN).